The primary structure comprises 276 residues: Lysosome-associated membrane glycoprotein 5 (276 aa).

The signal sequence occupies residues 1 to 27 (MDYRACTSALRMPVLLLLLCTFSCNLA). At 28–231 (EQEVENLSGL…PTDQRKQLEE (204 aa)) the chain is on the extracellular side. Residues Asn33, Asn51, and Asn100 are each glycosylated (N-linked (GlcNAc...) asparagine). A helical transmembrane segment spans residues 232 to 252 (TLPLILGLTLGVAILIIVAVY). Residues 253 to 276 (HIHHKMTANQVQIPRDRSLYKHMG) lie on the Cytoplasmic side of the membrane.

It belongs to the LAMP family. In terms of processing, glycosylated.

The protein resides in the cytoplasmic vesicle membrane. The protein localises to the cell membrane. Its subcellular location is the cell projection. It is found in the dendrite. It localises to the cytoplasmic vesicle. The protein resides in the secretory vesicle. The protein localises to the synaptic vesicle membrane. Its subcellular location is the growth cone membrane. It is found in the early endosome membrane. It localises to the recycling endosome. The protein resides in the endoplasmic reticulum-Golgi intermediate compartment membrane. The protein localises to the endosome membrane. In terms of biological role, plays a role in short-term synaptic plasticity in a subset of GABAergic neurons in the brain. This chain is Lysosome-associated membrane glycoprotein 5 (lamp5), found in Xenopus tropicalis (Western clawed frog).